Reading from the N-terminus, the 270-residue chain is Regulator of G-protein signaling rgs-10 (270 aa).

Positions 135-252 (SPETLAASEY…LEDPLYLDLV (118 aa)) constitute an RGS domain.

Shown to have a role in viability and embryogenesis. In Caenorhabditis elegans, this protein is Regulator of G-protein signaling rgs-10 (rgs-10).